We begin with the raw amino-acid sequence, 293 residues long: tRNA-cytidine(32) 2-sulfurtransferase (293 aa).

The short motif at 62–67 is the PP-loop motif element; sequence SGGKDS. [4Fe-4S] cluster contacts are provided by Cys137, Cys140, and Cys228.

It belongs to the TtcA family. In terms of assembly, homodimer. Mg(2+) serves as cofactor. Requires [4Fe-4S] cluster as cofactor.

Its subcellular location is the cytoplasm. The catalysed reaction is cytidine(32) in tRNA + S-sulfanyl-L-cysteinyl-[cysteine desulfurase] + AH2 + ATP = 2-thiocytidine(32) in tRNA + L-cysteinyl-[cysteine desulfurase] + A + AMP + diphosphate + H(+). It functions in the pathway tRNA modification. Catalyzes the ATP-dependent 2-thiolation of cytidine in position 32 of tRNA, to form 2-thiocytidine (s(2)C32). The sulfur atoms are provided by the cysteine/cysteine desulfurase (IscS) system. In Brucella abortus (strain S19), this protein is tRNA-cytidine(32) 2-sulfurtransferase.